The sequence spans 379 residues: tRNA-specific 2-thiouridylase MnmA (379 aa).

Residues 9–16 (AMSGGVDS) and methionine 35 each bind ATP. Residues 94-96 (NPD) are interaction with target base in tRNA. Cysteine 99 (nucleophile) is an active-site residue. Cysteine 99 and cysteine 195 are disulfide-bonded. Residue glycine 123 coordinates ATP. Positions 145 to 147 (KDQ) are interaction with tRNA. Cysteine 195 acts as the Cysteine persulfide intermediate in catalysis. The segment at 307-308 (RY) is interaction with tRNA.

This sequence belongs to the MnmA/TRMU family.

The protein localises to the cytoplasm. It carries out the reaction S-sulfanyl-L-cysteinyl-[protein] + uridine(34) in tRNA + AH2 + ATP = 2-thiouridine(34) in tRNA + L-cysteinyl-[protein] + A + AMP + diphosphate + H(+). Catalyzes the 2-thiolation of uridine at the wobble position (U34) of tRNA, leading to the formation of s(2)U34. In Xylella fastidiosa (strain M12), this protein is tRNA-specific 2-thiouridylase MnmA.